The primary structure comprises 123 residues: Protein LLP homolog (123 aa).

Over residues 1 to 21 (MAKSIRSKWKRKMRAEKRKKN) the composition is skewed to basic residues. 2 disordered regions span residues 1–23 (MAKSIRSKWKRKMRAEKRKKNAP) and 55–123 (KINE…KLAW). Over residues 70-89 (DSSKMDMELKRNKKNLRDQH) the composition is skewed to basic and acidic residues. Positions 100–123 (QQKKLKSQCGKKKGKSKQAKKLAW) are enriched in basic residues.

It belongs to the learning-associated protein family.

It is found in the nucleus. It localises to the nucleolus. Its subcellular location is the chromosome. In terms of biological role, regulates dendritic and spine growth and synaptic transmission. This chain is Protein LLP homolog (llph), found in Xenopus tropicalis (Western clawed frog).